Reading from the N-terminus, the 572-residue chain is Urease subunit alpha (572 aa).

The region spanning 136–572 is the Urease domain; the sequence is GGIDTHIHFI…VPLGQRYFLF (437 aa). His141, His143, and Lys224 together coordinate Ni(2+). At Lys224 the chain carries N6-carboxylysine. His226 serves as a coordination point for substrate. Residues His253 and His279 each contribute to the Ni(2+) site. Catalysis depends on His327, which acts as the Proton donor. Asp367 contacts Ni(2+).

The protein belongs to the metallo-dependent hydrolases superfamily. Urease alpha subunit family. Heterotrimer of UreA (gamma), UreB (beta) and UreC (alpha) subunits. Three heterotrimers associate to form the active enzyme. Ni cation serves as cofactor. Carboxylation allows a single lysine to coordinate two nickel ions.

The protein resides in the cytoplasm. It catalyses the reaction urea + 2 H2O + H(+) = hydrogencarbonate + 2 NH4(+). Its pathway is nitrogen metabolism; urea degradation; CO(2) and NH(3) from urea (urease route): step 1/1. This Haemophilus influenzae (strain ATCC 51907 / DSM 11121 / KW20 / Rd) protein is Urease subunit alpha.